The chain runs to 178 residues: uncharacterized protein (178 aa).

This is an uncharacterized protein from Escherichia coli (strain K12).